The following is a 273-amino-acid chain: Orotidine 5'-phosphate decarboxylase (273 aa).

The Proton donor role is filled by Lys-96.

It belongs to the OMP decarboxylase family. Type 2 subfamily.

It carries out the reaction orotidine 5'-phosphate + H(+) = UMP + CO2. It participates in pyrimidine metabolism; UMP biosynthesis via de novo pathway; UMP from orotate: step 2/2. The polypeptide is Orotidine 5'-phosphate decarboxylase (Nocardioides sp. (strain ATCC BAA-499 / JS614)).